The following is a 1118-amino-acid chain: Cytospin-A (1118 aa).

4 disordered regions span residues 1 to 63 (MKKA…AGMA), 75 to 176 (KKST…NQIS), 294 to 324 (SLSPEITPGNQSDGGGTLTSSVEGSAPGSVE), and 359 to 391 (SSDDALDAPSSSESEGVPSIERSRKGSSGNASE). Over residues 80–90 (SSAAPSAPAPA) the composition is skewed to low complexity. Polar residues predominate over residues 93-117 (ISENKSKISTGTSSSAKRSTSAGNK). Residues 120–131 (SSTRERLRERTR) are compositionally biased toward basic and acidic residues. Residues 133 to 145 (NQSKKLPSVSQGA) are compositionally biased toward polar residues. The segment covering 158-171 (TAAEGDIRMSKSKS) has biased composition (basic and acidic residues). The stretch at 168 to 281 (KSKSDNQISD…LNALGFSLEQ (114 aa)) forms a coiled coil. The span at 294–304 (SLSPEITPGNQ) shows a compositional bias: polar residues. A compositionally biased stretch (low complexity) spans 359–373 (SSDDALDAPSSSESE). Serine 385, serine 386, and serine 390 each carry phosphoserine. 2 coiled-coil regions span residues 395–450 (ACLT…MESL) and 488–808 (RYME…RGRV). A phosphoserine mark is found at serine 869, serine 882, and serine 888. The tract at residues 921 to 999 (TSSTSRPASL…STRSRIREER (79 aa)) is disordered. Positions 947 to 957 (RSSEEMKRDIS) are enriched in basic and acidic residues. The span at 972–992 (TTSPQLSLSSSPTASVTPSTR) shows a compositional bias: low complexity. One can recognise a Calponin-homology (CH) domain in the interval 1012 to 1117 (GSKRNALLKW…YVTAIYKYFE (106 aa)).

It belongs to the cytospin-A family. May interact with both microtubules and actin cytoskeleton.

The protein localises to the cytoplasm. It is found in the cytoskeleton. The protein resides in the spindle. Its subcellular location is the cell junction. It localises to the gap junction. Functionally, involved in cytokinesis and spindle organization. May play a role in actin cytoskeleton organization and microtubule stabilization and hence required for proper cell adhesion and migration. This Mus musculus (Mouse) protein is Cytospin-A (Specc1l).